We begin with the raw amino-acid sequence, 60 residues long: Large ribosomal subunit protein bL32 (60 aa).

Belongs to the bacterial ribosomal protein bL32 family.

The sequence is that of Large ribosomal subunit protein bL32 from Paramagnetospirillum magneticum (strain ATCC 700264 / AMB-1) (Magnetospirillum magneticum).